The chain runs to 121 residues: Large ribosomal subunit protein bL12 (121 aa).

The protein belongs to the bacterial ribosomal protein bL12 family. As to quaternary structure, homodimer. Part of the ribosomal stalk of the 50S ribosomal subunit. Forms a multimeric L10(L12)X complex, where L10 forms an elongated spine to which 2 to 4 L12 dimers bind in a sequential fashion. Binds GTP-bound translation factors.

Functionally, forms part of the ribosomal stalk which helps the ribosome interact with GTP-bound translation factors. Is thus essential for accurate translation. The polypeptide is Large ribosomal subunit protein bL12 (Klebsiella pneumoniae (strain 342)).